The primary structure comprises 225 residues: Ribonuclease 3 (225 aa).

The RNase III domain occupies 4-127 (IEKLEQSLTY…IIGAIHLEAG (124 aa)). E40 serves as a coordination point for Mg(2+). The active site involves D44. The Mg(2+) site is built by D113 and E116. The active site involves E116. The DRBM domain maps to 154 to 223 (DYKTKLQEIT…AKIALEKLGS (70 aa)).

This sequence belongs to the ribonuclease III family. Homodimer. Mg(2+) is required as a cofactor.

It is found in the cytoplasm. It carries out the reaction Endonucleolytic cleavage to 5'-phosphomonoester.. In terms of biological role, digests double-stranded RNA. Involved in the processing of primary rRNA transcript to yield the immediate precursors to the large and small rRNAs (23S and 16S). Processes some mRNAs, and tRNAs when they are encoded in the rRNA operon. Processes pre-crRNA and tracrRNA of type II CRISPR loci if present in the organism. This chain is Ribonuclease 3, found in Campylobacter jejuni subsp. doylei (strain ATCC BAA-1458 / RM4099 / 269.97).